We begin with the raw amino-acid sequence, 603 residues long: Elongation factor 4 (603 aa).

In terms of domain architecture, tr-type G spans 2-184 (NHIRNFSIIA…AVVALIPAPK (183 aa)). GTP-binding positions include 14–19 (DHGKST) and 131–134 (NKMD).

The protein belongs to the TRAFAC class translation factor GTPase superfamily. Classic translation factor GTPase family. LepA subfamily.

It is found in the cell inner membrane. It catalyses the reaction GTP + H2O = GDP + phosphate + H(+). Required for accurate and efficient protein synthesis under certain stress conditions. May act as a fidelity factor of the translation reaction, by catalyzing a one-codon backward translocation of tRNAs on improperly translocated ribosomes. Back-translocation proceeds from a post-translocation (POST) complex to a pre-translocation (PRE) complex, thus giving elongation factor G a second chance to translocate the tRNAs correctly. Binds to ribosomes in a GTP-dependent manner. This Polaromonas naphthalenivorans (strain CJ2) protein is Elongation factor 4.